Here is a 158-residue protein sequence, read N- to C-terminus: Cyclic pyranopterin monophosphate synthase (158 aa).

Substrate is bound by residues Leu-76–His-78 and Met-114–Glu-115. Asp-129 is an active-site residue.

The protein belongs to the MoaC family. As to quaternary structure, homohexamer; trimer of dimers.

It carries out the reaction (8S)-3',8-cyclo-7,8-dihydroguanosine 5'-triphosphate = cyclic pyranopterin phosphate + diphosphate. The protein operates within cofactor biosynthesis; molybdopterin biosynthesis. Functionally, catalyzes the conversion of (8S)-3',8-cyclo-7,8-dihydroguanosine 5'-triphosphate to cyclic pyranopterin monophosphate (cPMP). This chain is Cyclic pyranopterin monophosphate synthase, found in Shewanella halifaxensis (strain HAW-EB4).